The following is a 146-amino-acid chain: MQKTTFVKNEAALANKKWYVIDASNLILGKLAVEAANILRGKNKVDFTPNVDCGDYLIIINSDKIVLSSDKADREKWYTHSGYIGGLKEKSGRLMIEKYSDKLIYGAIKGMLPKNTLSRYLIKKLFIYKDANHKQAAQKPMEIKLN.

The protein belongs to the universal ribosomal protein uL13 family. In terms of assembly, part of the 50S ribosomal subunit.

Its function is as follows. This protein is one of the early assembly proteins of the 50S ribosomal subunit, although it is not seen to bind rRNA by itself. It is important during the early stages of 50S assembly. This chain is Large ribosomal subunit protein uL13, found in Malacoplasma penetrans (strain HF-2) (Mycoplasma penetrans).